A 349-amino-acid polypeptide reads, in one-letter code: Twinfilin-2 (349 aa).

The residue at position 2 (Ala2) is an N-acetylalanine. 2 ADF-H domains span residues 4–139 (QTGI…KHLS) and 177–313 (GLAF…DEVH). Lys14 is modified (N6-acetyllysine). Position 309 is a phosphotyrosine (Tyr309). Residues 322 to 349 (AFAKPKGPGGKRGHKRLIRGPGENGEDS) form a disordered region. The span at 330–339 (GGKRGHKRLI) shows a compositional bias: basic residues. Ser349 carries the phosphoserine modification.

This sequence belongs to the actin-binding proteins ADF family. Twinfilin subfamily. As to quaternary structure, interacts with G-actin; ADP-actin form and capping protein (CP). Isoform 2 interacts (via its N-terminal ADF-H domain) with G-actin (ADP-bound form) with significantly higher affinity than isoform 1. May also be able to interact with TWF1 and phosphoinositides, PI(4,5)P2. When bound to PI(4,5)P2, it is down-regulated. Interacts with MYO7A. Post-translationally, phosphorylated on both serine/threonine and tyrosine. As to expression, isoform 1 is ubiquitously expressed (at protein level). Isoform 2 expression is restricted to heart and skeletal muscle where it is the predominant form.

Its subcellular location is the cytoplasm. It is found in the cytoskeleton. The protein resides in the perinuclear region. The protein localises to the cell projection. It localises to the stereocilium. Functionally, actin-binding protein involved in motile and morphological processes. Inhibits actin polymerization, likely by sequestering G-actin. By capping the barbed ends of filaments, it also regulates motility. Seems to play an important role in clathrin-mediated endocytosis and distribution of endocytic organelles. May play a role in regulating the mature length of the middle and short rows of stereocilia. The protein is Twinfilin-2 (Twf2) of Mus musculus (Mouse).